The primary structure comprises 200 residues: Peptidyl-tRNA hydrolase (200 aa).

Residue Tyr15 coordinates tRNA. The active-site Proton acceptor is His20. Residues Phe66, Asn68, and Asn114 each coordinate tRNA.

The protein belongs to the PTH family. As to quaternary structure, monomer.

It is found in the cytoplasm. It catalyses the reaction an N-acyl-L-alpha-aminoacyl-tRNA + H2O = an N-acyl-L-amino acid + a tRNA + H(+). In terms of biological role, hydrolyzes ribosome-free peptidyl-tRNAs (with 1 or more amino acids incorporated), which drop off the ribosome during protein synthesis, or as a result of ribosome stalling. Functionally, catalyzes the release of premature peptidyl moieties from peptidyl-tRNA molecules trapped in stalled 50S ribosomal subunits, and thus maintains levels of free tRNAs and 50S ribosomes. The protein is Peptidyl-tRNA hydrolase of Ralstonia nicotianae (strain ATCC BAA-1114 / GMI1000) (Ralstonia solanacearum).